The chain runs to 80 residues: Putative membrane protein insertion efficiency factor (80 aa).

Residues 61–80 (KTGKDPVPDHFSLKRNQEGE) form a disordered region. A compositionally biased stretch (basic and acidic residues) spans 62–80 (TGKDPVPDHFSLKRNQEGE).

It belongs to the UPF0161 family.

It is found in the cell membrane. In terms of biological role, could be involved in insertion of integral membrane proteins into the membrane. The polypeptide is Putative membrane protein insertion efficiency factor (Streptococcus pneumoniae (strain 70585)).